The primary structure comprises 316 residues: NAC domain-containing protein 2 (316 aa).

The 154-residue stretch at 17 to 170 folds into the NAC domain; the sequence is LPPGFRFHPT…DWVLCRLYNK (154 aa). Residues 114–176 mediate DNA binding; that stretch reads LGIKKALVFY…LYNKKNEWEK (63 aa). Residues 185-210 form a disordered region; sequence EEASDMVTSQSHSHTHSWGETRTPES. Residues 190–200 are compositionally biased toward polar residues; the sequence is MVTSQSHSHTH.

As to quaternary structure, forms homodimer. Interacts with NAC071. In terms of tissue distribution, expressed in roots and stamens.

The protein resides in the nucleus. Functionally, transcription factor that possesses transactivation activity. Transcription activator involved in response to abiotic stresses. Plays a positive role during dehydration and salt stress. Binds specifically to the 5'-CATGTG-3' motif found in promoters of stress-responsive genes. This is NAC domain-containing protein 2 from Oryza sativa subsp. japonica (Rice).